We begin with the raw amino-acid sequence, 267 residues long: Thiamine pyrophosphokinase 2 (267 aa).

The protein belongs to the thiamine pyrophosphokinase family.

It is found in the cytoplasm. The protein localises to the cytosol. It carries out the reaction thiamine + ATP = thiamine diphosphate + AMP + H(+). Its pathway is cofactor biosynthesis; thiamine diphosphate biosynthesis; thiamine diphosphate from thiamine: step 1/1. Functionally, catalyzes the phosphorylation of thiamine to thiamine pyrophosphate (TPP). TPP is an active cofactor for enzymes involved in glycolysis and energy production. Plant leaves require high levels of TPP for photosynthesis and carbohydrate metabolism. The protein is Thiamine pyrophosphokinase 2 (TPK2) of Oryza sativa subsp. japonica (Rice).